The following is a 144-amino-acid chain: 3-dehydroquinate dehydratase (144 aa).

Catalysis depends on Y24, which acts as the Proton acceptor. 3 residues coordinate substrate: N76, H82, and D89. The Proton donor role is filled by H102. Residues 103–104 (LS) and R113 each bind substrate.

This sequence belongs to the type-II 3-dehydroquinase family. Homododecamer.

The catalysed reaction is 3-dehydroquinate = 3-dehydroshikimate + H2O. Its pathway is metabolic intermediate biosynthesis; chorismate biosynthesis; chorismate from D-erythrose 4-phosphate and phosphoenolpyruvate: step 3/7. In terms of biological role, catalyzes a trans-dehydration via an enolate intermediate. In Bordetella bronchiseptica (strain ATCC BAA-588 / NCTC 13252 / RB50) (Alcaligenes bronchisepticus), this protein is 3-dehydroquinate dehydratase.